A 164-amino-acid polypeptide reads, in one-letter code: Hydrogenase 2 maturation protease (164 aa).

Residues Glu-16, Asp-62, and His-93 each coordinate Ni(2+).

This sequence belongs to the peptidase A31 family. It depends on Ni(2+) as a cofactor.

In terms of biological role, protease involved in the C-terminal processing of HybC, the large subunit of hydrogenase 2. Specifically cleaves off a 15 amino acid peptide from the C-terminus of the precursor of HybC. In Escherichia coli (strain K12), this protein is Hydrogenase 2 maturation protease (hybD).